A 309-amino-acid chain; its full sequence is Protein FdhE homolog (309 aa).

The protein belongs to the FdhE family.

Its subcellular location is the cytoplasm. Functionally, necessary for formate dehydrogenase activity. This Pseudomonas aeruginosa (strain ATCC 15692 / DSM 22644 / CIP 104116 / JCM 14847 / LMG 12228 / 1C / PRS 101 / PAO1) protein is Protein FdhE homolog.